A 770-amino-acid polypeptide reads, in one-letter code: Protein PAT1 homolog 1 (770 aa).

The segment at methionine 1–valine 42 is disordered. Residues methionine 1–glutamate 84 are region A; interaction with DDX6/RCK. The involved in nuclear foci localization stretch occupies residues methionine 1 to arginine 397. Positions leucine 7–asparagine 33 are enriched in acidic residues. A region N; interaction with decapping machinery region spans residues asparagine 85 to histidine 388. The Nuclear export signal motif lies at leucine 86–isoleucine 95. Residues proline 155–proline 195 are disordered. Residue serine 177 is modified to Phosphoserine. Threonine 178 bears the Phosphothreonine mark. Phosphoserine is present on residues serine 179 and serine 184. Threonine 194 bears the Phosphothreonine mark. Asymmetric dimethylarginine is present on residues arginine 217, arginine 223, and arginine 263. The involved in RNA-binding stretch occupies residues arginine 223–arginine 397. Position 278 is a phosphoserine (serine 278). Arginine 284 carries the post-translational modification Asymmetric dimethylarginine. Disordered regions lie at residues phenylalanine 319–leucine 340 and histidine 376–leucine 396. The span at alanine 321–glycine 337 shows a compositional bias: pro residues. Arginine 385 carries the omega-N-methylarginine modification. The segment covering arginine 385–leucine 396 has biased composition (basic and acidic residues). The region H stretch occupies residues glutamine 389–glutamate 448. Residues lysine 398–arginine 770 form an involved in nuclear speckle localization region. The interval isoleucine 449–arginine 770 is region C.

It belongs to the PAT1 family. As to quaternary structure, interacts (via region A) with DDX6/RCK. Interacts (via region H and region C) with LSM1 and LSM4. Interacts (via region N) with DCP1A, DCP2, EDC3, EDC4 and XRN1. Interacts with the CCR4-NOT complex. Interacts with the Lsm-containing SMN-Sm protein complex. Interacts with EIF4ENIF1/4E-T.

The protein localises to the cytoplasm. The protein resides in the P-body. It is found in the nucleus. It localises to the PML body. Its subcellular location is the nucleus speckle. RNA-binding protein involved in deadenylation-dependent decapping of mRNAs, leading to the degradation of mRNAs. Acts as a scaffold protein that connects deadenylation and decapping machinery. Required for cytoplasmic mRNA processing body (P-body) assembly. The chain is Protein PAT1 homolog 1 (Patl1) from Mus musculus (Mouse).